Here is a 325-residue protein sequence, read N- to C-terminus: Peroxidase 1 (325 aa).

The N-terminal stretch at 1–21 (MAIKNILALVVLLSVVGVSVA) is a signal peptide. 4 disulfides stabilise this stretch: C35-C113, C68-C73, C119-C321, and C198-C230. H66 (proton acceptor) is an active-site residue. Ca(2+)-binding residues include D67, V70, G72, D74, and S76. Residue P161 coordinates substrate. H191 serves as a coordination point for heme b. T192 is a Ca(2+) binding site. An N-linked (GlcNAc...) asparagine glycan is attached at N207. Ca(2+) is bound by residues D242, S245, and D250.

This sequence belongs to the peroxidase family. Classical plant (class III) peroxidase subfamily. The cofactor is heme b. Requires Ca(2+) as cofactor. Slightly expressed in roots.

Its subcellular location is the secreted. The enzyme catalyses 2 a phenolic donor + H2O2 = 2 a phenolic radical donor + 2 H2O. Functionally, removal of H(2)O(2), oxidation of toxic reductants, biosynthesis and degradation of lignin, suberization, auxin catabolism, response to environmental stresses such as wounding, pathogen attack and oxidative stress. These functions might be dependent on each isozyme/isoform in each plant tissue. This Arabidopsis thaliana (Mouse-ear cress) protein is Peroxidase 1 (PER1).